A 493-amino-acid chain; its full sequence is MAAGPAFLIAGTTSDAGKSVITAGLCRAFARAGLRVAPFKAQNMSNNSAVTSDGGEIGRAQALQALACGLEPSVEFNPILLKPGPDNRARLVIRGREQGDVGAGDYIRHRHDLRGIAAAQLESLRERFDIVVCEGAGSPAEINLRATDVANFGLAQAAQLAVYIVGDIDRGGVLAHLFGTHAIISDEDRALIRGFVINKFRGHQELLEPGLVQLEELTGVETKAVIPFIDDIWIDAEDSLQSPVGRMVGPGGRHPLGTQRLSVAAIRLPRMLGVTDVEALAVEPGVTVTWVDDVDAVWDSDLVIIPGTTATVADLAWLRHRGLDRALGERATRGMPILGIGGGYQMMATTITDEGDSPSSVAGLALFDVHIALTPHNIMVNHGDGSYEVHHGQVRHHGEQTWIEGEGARREALFGTHRHGYLQDDPARRRFLTEVATHAGKPGFLVSPDTSFHGVRLQQLDRIADVLEEHWDLDQLLDEVSRPANAANTPETR.

One can recognise a GATase cobBQ-type domain in the interval 260–427; sequence RLSVAAIRLP…RHGYLQDDPA (168 aa). His419 is a catalytic residue.

This sequence belongs to the CobB/CobQ family. CobQ subfamily.

It functions in the pathway cofactor biosynthesis; adenosylcobalamin biosynthesis. Its function is as follows. Catalyzes amidations at positions B, D, E, and G on adenosylcobyrinic A,C-diamide. NH(2) groups are provided by glutamine, and one molecule of ATP is hydrogenolyzed for each amidation. The protein is Cobyric acid synthase of Corynebacterium efficiens (strain DSM 44549 / YS-314 / AJ 12310 / JCM 11189 / NBRC 100395).